Consider the following 166-residue polypeptide: uncharacterized protein (166 aa).

The interval 28–55 (SRQVHPPWPVPCKSKLQEQDSSESKESK) is disordered. Residues 42-55 (KLQEQDSSESKESK) are compositionally biased toward basic and acidic residues. Residues 67-163 (QNAMLYIENN…NYTPKQFKRT (97 aa)) form the HTH araC/xylS-type domain. 2 consecutive DNA-binding regions (H-T-H motif) follow at residues 84-105 (DTVA…KLAT) and 130-153 (VTET…KKRT).

This is an uncharacterized protein from Pseudoalteromonas carrageenovora (Alteromonas carrageenovora).